The chain runs to 234 residues: tRNA (guanine-N(1)-)-methyltransferase (234 aa).

S-adenosyl-L-methionine contacts are provided by residues Gly-110 and 134–139 (IGDYVL).

The protein belongs to the RNA methyltransferase TrmD family. In terms of assembly, homodimer.

Its subcellular location is the cytoplasm. It catalyses the reaction guanosine(37) in tRNA + S-adenosyl-L-methionine = N(1)-methylguanosine(37) in tRNA + S-adenosyl-L-homocysteine + H(+). In terms of biological role, specifically methylates guanosine-37 in various tRNAs. This Tropheryma whipplei (strain Twist) (Whipple's bacillus) protein is tRNA (guanine-N(1)-)-methyltransferase.